Here is a 95-residue protein sequence, read N- to C-terminus: MTIDLKTIKHISKLSRISVDDAKANKLAGDLNSIFDFIEKLNELNTDNIEPLTSVAETTLKLRADEVKSENIRDQILKNSPEENEDFFVVPRVVE.

Belongs to the GatC family. As to quaternary structure, heterotrimer of A, B and C subunits.

The enzyme catalyses L-glutamyl-tRNA(Gln) + L-glutamine + ATP + H2O = L-glutaminyl-tRNA(Gln) + L-glutamate + ADP + phosphate + H(+). It catalyses the reaction L-aspartyl-tRNA(Asn) + L-glutamine + ATP + H2O = L-asparaginyl-tRNA(Asn) + L-glutamate + ADP + phosphate + 2 H(+). Functionally, allows the formation of correctly charged Asn-tRNA(Asn) or Gln-tRNA(Gln) through the transamidation of misacylated Asp-tRNA(Asn) or Glu-tRNA(Gln) in organisms which lack either or both of asparaginyl-tRNA or glutaminyl-tRNA synthetases. The reaction takes place in the presence of glutamine and ATP through an activated phospho-Asp-tRNA(Asn) or phospho-Glu-tRNA(Gln). In Pelagibacter ubique (strain HTCC1062), this protein is Aspartyl/glutamyl-tRNA(Asn/Gln) amidotransferase subunit C.